Here is a 102-residue protein sequence, read N- to C-terminus: UPF0251 protein ASA_1331 (102 aa).

This sequence belongs to the UPF0251 family.

This is UPF0251 protein ASA_1331 from Aeromonas salmonicida (strain A449).